A 378-amino-acid chain; its full sequence is Sperm microtubule associated protein 2 (378 aa).

2 disordered regions span residues 1-35 (MGEL…SDGS) and 47-79 (WLQS…LPEV). Over residues 47-56 (WLQSSQATTE) the composition is skewed to polar residues. Residues 61-77 (DPEEEIPPEEMVGEELP) show a composition bias toward acidic residues. 7 THEG repeats span residues 113 to 132 (AKCR…PKFN), 179 to 198 (TITV…PKRF), 217 to 236 (STLE…PKIR), 253 to 272 (AAQM…PRAP), 285 to 304 (PKPY…PKAL), 321 to 340 (VTKN…PKIR), and 355 to 374 (ASLV…PKHI). Phosphoserine is present on S290.

In terms of assembly, interacts with CCT5.

It is found in the nucleus. May be involved (but not essential) in spermatogenesis. The protein is Sperm microtubule associated protein 2 of Rattus norvegicus (Rat).